The chain runs to 339 residues: Diguanylate cyclase VdcA (339 aa).

Residues 206–339 form the GGDEF domain; sequence QQVSLIMLDI…NLGRNRVMPL (134 aa). Aspartate 214 serves as a coordination point for Mg(2+). Substrate-binding residues include asparagine 222 and aspartate 231. Glutamate 257 contacts Mg(2+). Residue glutamate 257 is the Proton acceptor of the active site.

The cofactor is Mg(2+).

The catalysed reaction is 2 GTP = 3',3'-c-di-GMP + 2 diphosphate. It functions in the pathway purine metabolism; 3',5'-cyclic di-GMP biosynthesis. In terms of biological role, diguanylate cyclase (DGC) that catalyzes the synthesis of cyclic diguanylate (c-di-GMP) via the condensation of 2 GTP molecules. Is involved in the modulation of intracellular c-di-GMP levels. Cyclic-di-GMP is a second messenger which positively regulates biofilm formation and negatively regulates virulence in V.cholerae, and is proposed to play an important role in the transition from persistence in the environment to survival in the host. Overexpression of vdcA results in increased biofilm formation, and reduced motility and virulence. In Vibrio cholerae serotype O1 (strain ATCC 39315 / El Tor Inaba N16961), this protein is Diguanylate cyclase VdcA (vdcA).